The chain runs to 715 residues: Polyribonucleotide nucleotidyltransferase (715 aa).

Positions 487 and 493 each coordinate Mg(2+). One can recognise a KH domain in the interval 554–613; sequence PRIETFKIATDKIREVIGTGGKVIREIVEKTGAKVNIDDDGTVKVASSDGESIKAAIKWI. In terms of domain architecture, S1 motif spans 623-691; it reads NAIYDGTVVK…DRGKTRLSMK (69 aa). The segment at 696 to 715 is disordered; it reads ETGEDLEAKQKAAEGATAAE.

Belongs to the polyribonucleotide nucleotidyltransferase family. It depends on Mg(2+) as a cofactor.

The protein localises to the cytoplasm. The catalysed reaction is RNA(n+1) + phosphate = RNA(n) + a ribonucleoside 5'-diphosphate. Involved in mRNA degradation. Catalyzes the phosphorolysis of single-stranded polyribonucleotides processively in the 3'- to 5'-direction. The protein is Polyribonucleotide nucleotidyltransferase of Rhodopseudomonas palustris (strain BisB18).